Here is a 923-residue protein sequence, read N- to C-terminus: Mitochondrial 10-formyltetrahydrofolate dehydrogenase (923 aa).

The transit peptide at 1–19 (MLWRGSQALRHFSTSRVYF) directs the protein to the mitochondrion; not cleaved. The interval 23 to 331 (LKLALIGQSL…PASQYFSAGE (309 aa)) is hydrolase domain. Position 31 is a phosphoserine (Ser-31). The residue at position 60 (Lys-60) is an N6-succinyllysine. Residue 110 to 112 (QFI) coordinates (6R)-10-formyltetrahydrofolate. Residue His-128 is the Proton donor of the active site. Residue Asp-164 coordinates (6R)-10-formyltetrahydrofolate. The Carrier domain maps to 339 to 416 (AEELKVAETI…DFIQKVVRRL (78 aa)). Ser-375 is modified (O-(pantetheine 4'-phosphoryl)serine). The segment at 438–923 (TVKIPYQCFI…LKIKTVTLEY (486 aa)) is aldehyde dehydrogenase domain. NADP(+) is bound by residues 592–594 (IPW) and 618–621 (KPAQ). Phosphoserine is present on Ser-650. NADP(+) is bound by residues 651–656 (GGVAGQ) and 671–672 (GS). Lys-681 is modified (N6-succinyllysine). The active-site Proton acceptor is the Glu-694. Residue 694–695 (EL) participates in NADP(+) binding. Cys-728 serves as the catalytic Proton donor. NADP(+) contacts are provided by residues Lys-778 and 825–827 (ESF). Lys-903 bears the N6-acetyllysine mark.

In the N-terminal section; belongs to the GART family. The protein in the C-terminal section; belongs to the aldehyde dehydrogenase family. ALDH1L subfamily. In terms of processing, phosphopantetheinylation at Ser-375 by AASDHPPT is required for the formyltetrahydrofolate dehydrogenase activity.

The protein resides in the mitochondrion. The enzyme catalyses (6R)-10-formyltetrahydrofolate + NADP(+) + H2O = (6S)-5,6,7,8-tetrahydrofolate + CO2 + NADPH + H(+). Mitochondrial 10-formyltetrahydrofolate dehydrogenase that catalyzes the NADP(+)-dependent conversion of 10-formyltetrahydrofolate to tetrahydrofolate and carbon dioxide. This Mus musculus (Mouse) protein is Mitochondrial 10-formyltetrahydrofolate dehydrogenase.